Here is a 1058-residue protein sequence, read N- to C-terminus: Protein argonaute MEL1 (1058 aa).

2 stretches are compositionally biased toward gly residues: residues 1-12 and 24-37; these read MAYRGGGRGGRG and DVPG…GGGA. Disordered regions lie at residues 1 to 77 and 115 to 147; these read MAYR…YGAP and RAPP…PSAT. Positions 48–70 are enriched in pro residues; the sequence is WPPPGMTPRPGPPQPQYPRPGPP. A compositionally biased stretch (low complexity) spans 121–147; it reads HSSAPAPYQPAAAAPAPSSSSTAPSAT. In terms of domain architecture, PAZ spans 407–520; the sequence is TVIQFVEEFL…LPMEVCKIVE (114 aa). Residues 696-1016 form the Piwi domain; sequence LLIVILPEVS…AAFRARYYVE (321 aa).

The protein belongs to the argonaute family. Ago subfamily.

It localises to the nucleus. Its subcellular location is the nucleolus. Its function is as follows. Essential for the progression of premeiotic mitosis and meiosis during sporogenesis. Regulates the cell division of premeiotic germ cells, the proper modification of meiotic chromosomes, and the faithful progression of meiosis, probably via small RNA-mediated gene silencing. May be involved in histone H3 'Lys-9' demethylation in the pericentromeric region. The sequence is that of Protein argonaute MEL1 (MEL1) from Oryza sativa subsp. japonica (Rice).